Here is a 670-residue protein sequence, read N- to C-terminus: Microtubule-associated protein ssm4 (670 aa).

The 43-residue stretch at 23 to 65 (GSTDFESGIWLGVELLNGKGKNDGSVKGKRYFSCEKGKGIFVR) folds into the CAP-Gly domain. 2 coiled-coil regions span residues 209–254 (KSEL…KNSI) and 404–582 (VKTR…KLAD). Serine 460 bears the Phosphoserine mark. Threonine 606 carries the phosphothreonine modification.

The protein resides in the cytoplasm. The protein localises to the cytoskeleton. It is found in the spindle. Its function is as follows. Binds to nuclear microtubules with the effect of either modifying their structure or function. This then promotes meiotic nuclear division. In Schizosaccharomyces pombe (strain 972 / ATCC 24843) (Fission yeast), this protein is Microtubule-associated protein ssm4 (ssm4).